A 261-amino-acid chain; its full sequence is Carnitinyl-CoA dehydratase (261 aa).

Glu111 (nucleophile) is an active-site residue. The Proton acceptor role is filled by Glu131.

Belongs to the enoyl-CoA hydratase/isomerase family.

It catalyses the reaction (R)-carnitinyl-CoA = crotonobetainyl-CoA + H2O. It participates in amine and polyamine metabolism; carnitine metabolism. Its function is as follows. Catalyzes the reversible dehydration of L-carnitinyl-CoA to crotonobetainyl-CoA. This is Carnitinyl-CoA dehydratase from Salmonella arizonae (strain ATCC BAA-731 / CDC346-86 / RSK2980).